Reading from the N-terminus, the 321-residue chain is Lipoyl synthase (321 aa).

Positions 68, 73, 79, 94, 98, 101, and 308 each coordinate [4Fe-4S] cluster. The Radical SAM core domain maps to 80–297; sequence FNHGTATFMI…KEIALELGFT (218 aa).

The protein belongs to the radical SAM superfamily. Lipoyl synthase family. It depends on [4Fe-4S] cluster as a cofactor.

The protein localises to the cytoplasm. It carries out the reaction [[Fe-S] cluster scaffold protein carrying a second [4Fe-4S](2+) cluster] + N(6)-octanoyl-L-lysyl-[protein] + 2 oxidized [2Fe-2S]-[ferredoxin] + 2 S-adenosyl-L-methionine + 4 H(+) = [[Fe-S] cluster scaffold protein] + N(6)-[(R)-dihydrolipoyl]-L-lysyl-[protein] + 4 Fe(3+) + 2 hydrogen sulfide + 2 5'-deoxyadenosine + 2 L-methionine + 2 reduced [2Fe-2S]-[ferredoxin]. It functions in the pathway protein modification; protein lipoylation via endogenous pathway; protein N(6)-(lipoyl)lysine from octanoyl-[acyl-carrier-protein]: step 2/2. Functionally, catalyzes the radical-mediated insertion of two sulfur atoms into the C-6 and C-8 positions of the octanoyl moiety bound to the lipoyl domains of lipoate-dependent enzymes, thereby converting the octanoylated domains into lipoylated derivatives. The protein is Lipoyl synthase of Vibrio campbellii (strain ATCC BAA-1116).